A 136-amino-acid chain; its full sequence is MLARMSGPDPAPAALPTVLALDVSKSRIGFAVSAGRLAFGRGSVDRKRLPLDLKAVRLKVEETGAERLVLGLPLRTDGKPSPTADRVRAFGRVLMDKGYTVEYQDERFTTQRARALGAADEDEAAAVQILELWLMR.

Belongs to the YqgF nuclease family. As to quaternary structure, monomer; also forms low amounts of dimers. The cofactor is Mn(2+).

The protein resides in the cytoplasm. In terms of biological role, has robust sequence-specific RNase activity, acting as a 5'-3' exo/endonuclease on ssRNA substrates with minimally 3 consecutive adenine bases. Has no detectable nuclease activity on dsRNA, dsDNA or Holliday junction DNA. In Deinococcus radiodurans (strain ATCC 13939 / DSM 20539 / JCM 16871 / CCUG 27074 / LMG 4051 / NBRC 15346 / NCIMB 9279 / VKM B-1422 / R1), this protein is Ribonuclease YqgF.